The following is a 302-amino-acid chain: Probable 2-(5''-triphosphoribosyl)-3'-dephosphocoenzyme-A synthase 1 (302 aa).

It belongs to the CitG/MdcB family.

It carries out the reaction 3'-dephospho-CoA + ATP = 2'-(5''-triphospho-alpha-D-ribosyl)-3'-dephospho-CoA + adenine. The protein is Probable 2-(5''-triphosphoribosyl)-3'-dephosphocoenzyme-A synthase 1 of Salmonella paratyphi A (strain ATCC 9150 / SARB42).